Consider the following 119-residue polypeptide: MTRVKRGYIARKRRKKILAFVSGSRGAHSKLFRTANQRKARALVSAHRDRGKRKRDLRRLWITRINAAARANGVSYNRFIQYLYKRQLLPNRKTLAQIAVLDSNCFSTIFNNLSYDEIG.

It belongs to the bacterial ribosomal protein bL20 family.

The protein resides in the plastid. It localises to the chloroplast. Functionally, binds directly to 23S ribosomal RNA and is necessary for the in vitro assembly process of the 50S ribosomal subunit. It is not involved in the protein synthesizing functions of that subunit. The protein is Large ribosomal subunit protein bL20c (rpl20) of Pinus thunbergii (Japanese black pine).